The chain runs to 706 residues: Acyl-coenzyme A oxidase (706 aa).

The segment at Met-682–Lys-706 is disordered. The segment covering Pro-686–Glu-699 has biased composition (basic and acidic residues).

This sequence belongs to the acyl-CoA oxidase family. FAD serves as cofactor.

The protein localises to the peroxisome. The enzyme catalyses a 2,3-saturated acyl-CoA + O2 = a (2E)-enoyl-CoA + H2O2. Its pathway is lipid metabolism; peroxisomal fatty acid beta-oxidation. This chain is Acyl-coenzyme A oxidase (POX1), found in Debaryomyces hansenii (strain ATCC 36239 / CBS 767 / BCRC 21394 / JCM 1990 / NBRC 0083 / IGC 2968) (Yeast).